Reading from the N-terminus, the 466-residue chain is GATA-binding factor 2 (466 aa).

Low complexity-rich tracts occupy residues 139 to 155 (GSST…TPAS) and 174 to 188 (PDPN…SSSA). A disordered region spans residues 139–196 (GSSTSSTASVSSLTPASHSGSHLFGFPPTPPKEVSPDPNSTSAASPSSSAGARQEDKD). 2 GATA-type zinc fingers span residues 281-305 (CVNC…CNAC) and 335-359 (CANC…CNAC). The disordered stretch occupies residues 436–466 (GHILPTPTPIHPSSSISFGHPHPSSMVTAMG).

Expressed in all developmental stages of erythroid cells but is additionally found in a limited subset of other tissues.

The protein resides in the nucleus. Its function is as follows. Transcriptional activator which probably serves as a general switch factor for cell-specific development. It binds to DNA sites with the consensus sequence 5'-[AT]GATA[AG]-3' within regulatory regions of genes. In Gallus gallus (Chicken), this protein is GATA-binding factor 2 (GATA2).